We begin with the raw amino-acid sequence, 625 residues long: DELLA protein SLR1 (625 aa).

A disordered region spans residues 1 to 34 (MKREYQEAGGSSGGGSSADMGSCKDKVMAGAAGE). The short motif at 39–43 (DELLA) is the DELLA motif element. The interval 167–209 (TADPSAADSARDTKRMRTGGGSTSSSSSSSSSLGGGASRGSVV) is disordered. The segment covering 189–198 (TSSSSSSSSS) has biased composition (low complexity). Positions 232-621 (VDTQEAGIRL…RPLIATSAWR (390 aa)) constitute a GRAS domain. The tract at residues 239 to 294 (IRLVHALLACAEAVQQENFAAAEALVKQIPTLAASQGGAMRKVAAYFGEALARRVY) is leucine repeat I (LRI). The tract at residues 241 to 278 (LVHALLACAEAVQQENFAAAEALVKQIPTLAASQGGAM) is required for possible homodimerization. A LxCxE motif motif is present at residues 246 to 250 (LACAE). A VHIID region spans residues 313-378 (HAHFYESCPY…GGPPSFRLTG (66 aa)). The VHIID motif lies at 344-348 (VHVVD). Residues 392–431 (QVGWKLAQFAHTIRVDFQYRGLVAATLADLEPFMLQPEGE) form a leucine repeat II (LRII) region. The PFYRE stretch occupies residues 441 to 542 (IAVNSVFELH…EVYLGRQICN (102 aa)). The LXXLL motif signature appears at 449–453 (LHRLL). Residues 545-621 (ACEGAERTER…RPLIATSAWR (77 aa)) form an SAW region.

This sequence belongs to the GRAS family. DELLA subfamily. As to quaternary structure, may be a homodimer. Interacts directly with the GID2 component of the SCF(GID2) complex. Interacts with GID1 in a GA-dependent manner, probably leading to its interaction with GID2 and its subsequent degradation. Interacts with D14 and GID1 in an strigolactone-dependent manner. Interacts with HD16/EL1. Phosphorylated on Ser/Thr residues in the N-terminal part. Both phosphorylated and unphosphorylated forms are degraded upon GA treatment, suggesting that phosphorylation does not trigger ubiquitination. Phosphorylated by HD16/EL1. Phosphorylation enhances its stability. Post-translationally, ubiquitinated. Upon GA application it is ubiquitinated by the SCF(GID2) complex, leading to its subsequent degradation. Expressed in nodes, internodes, leaf sheats of young seedlings and ears of adult plants. Weakly expressed in leaf blade and root.

The protein localises to the nucleus. Probable transcriptional regulator that acts as a repressor of the gibberellin (GA) signaling pathway. Probably acts by participating in large multiprotein complexes that repress transcription of GA-inducible genes. Upon GA application, it is degraded by the proteasome, allowing the GA signaling pathway. In contrast, its overexpression prevents the GA signaling pathway and induces a dwarf phenotype. The polypeptide is DELLA protein SLR1 (Oryza sativa subsp. japonica (Rice)).